The following is a 414-amino-acid chain: NADH kinase POS5, mitochondrial (414 aa).

It belongs to the NAD kinase family.

It localises to the mitochondrion matrix. It carries out the reaction NADH + ATP = ADP + NADPH + H(+). Its function is as follows. Phosphorylates both NADH and NAD(+), with a twofold preference for NADH. Anti-oxidant factor and key source of the cellular reductant NADPH. The protein is NADH kinase POS5, mitochondrial (POS5) of Saccharomyces cerevisiae (strain ATCC 204508 / S288c) (Baker's yeast).